We begin with the raw amino-acid sequence, 88 residues long: Small ribosomal subunit protein bS18 (88 aa).

The interval 1 to 26 is disordered; the sequence is MAFAQSGGAGGGGGQRRPFFRRRKTC.

This sequence belongs to the bacterial ribosomal protein bS18 family. Part of the 30S ribosomal subunit. Forms a tight heterodimer with protein bS6.

Functionally, binds as a heterodimer with protein bS6 to the central domain of the 16S rRNA, where it helps stabilize the platform of the 30S subunit. In Xanthobacter autotrophicus (strain ATCC BAA-1158 / Py2), this protein is Small ribosomal subunit protein bS18.